The following is a 454-amino-acid chain: Light-independent protochlorophyllide reductase subunit N (454 aa).

Residues cysteine 22, cysteine 47, and cysteine 107 each coordinate [4Fe-4S] cluster.

Belongs to the BchN/ChlN family. As to quaternary structure, protochlorophyllide reductase is composed of three subunits; ChlL, ChlN and ChlB. Forms a heterotetramer of two ChlB and two ChlN subunits. [4Fe-4S] cluster is required as a cofactor.

Its subcellular location is the plastid. The protein resides in the chloroplast. The enzyme catalyses chlorophyllide a + oxidized 2[4Fe-4S]-[ferredoxin] + 2 ADP + 2 phosphate = protochlorophyllide a + reduced 2[4Fe-4S]-[ferredoxin] + 2 ATP + 2 H2O. It participates in porphyrin-containing compound metabolism; chlorophyll biosynthesis (light-independent). Component of the dark-operative protochlorophyllide reductase (DPOR) that uses Mg-ATP and reduced ferredoxin to reduce ring D of protochlorophyllide (Pchlide) to form chlorophyllide a (Chlide). This reaction is light-independent. The NB-protein (ChlN-ChlB) is the catalytic component of the complex. The chain is Light-independent protochlorophyllide reductase subunit N from Cycas taitungensis (Prince sago).